The primary structure comprises 203 residues: Peptidyl-tRNA hydrolase (203 aa).

Tyr18 is a binding site for tRNA. Residue His23 is the Proton acceptor of the active site. 3 residues coordinate tRNA: Phe69, Asn71, and Asn117.

This sequence belongs to the PTH family. As to quaternary structure, monomer.

The protein localises to the cytoplasm. It carries out the reaction an N-acyl-L-alpha-aminoacyl-tRNA + H2O = an N-acyl-L-amino acid + a tRNA + H(+). Its function is as follows. Hydrolyzes ribosome-free peptidyl-tRNAs (with 1 or more amino acids incorporated), which drop off the ribosome during protein synthesis, or as a result of ribosome stalling. Functionally, catalyzes the release of premature peptidyl moieties from peptidyl-tRNA molecules trapped in stalled 50S ribosomal subunits, and thus maintains levels of free tRNAs and 50S ribosomes. The protein is Peptidyl-tRNA hydrolase of Prochlorococcus marinus subsp. pastoris (strain CCMP1986 / NIES-2087 / MED4).